A 440-amino-acid polypeptide reads, in one-letter code: Transposon TyH3 Gag polyprotein (440 aa).

Polar residues-rich tracts occupy residues 1–23 (MESQ…SVTS), 48–60 (TKAN…TPAS), and 127–152 (QSQF…GNTF). Disordered regions lie at residues 1–93 (MESQ…MMTQ), 126–173 (PQSQ…RPPP), and 352–440 (GSRN…PETY). Positions 153–165 (TDSSSADSDMTST) are enriched in low complexity. Residues 299 to 401 (NNGIHINNKV…NSKSKTARAH (103 aa)) form an RNA-binding region. The span at 402–418 (NVSTSNNSPSTDNDSIS) shows a compositional bias: low complexity. Phosphoserine is present on Ser-416. Polar residues predominate over residues 419–428 (KSTTEPIQLN). Over residues 429–440 (NKHDLHLRPETY) the composition is skewed to basic and acidic residues.

In terms of assembly, homotrimer.

It localises to the cytoplasm. Its function is as follows. Capsid protein (CA) is the structural component of the virus-like particle (VLP), forming the shell that encapsulates the retrotransposons dimeric RNA genome. The particles are assembled from trimer-clustered units and there are holes in the capsid shells that allow for the diffusion of macromolecules. CA also has nucleocapsid-like chaperone activity, promoting primer tRNA(i)-Met annealing to the multipartite primer-binding site (PBS), dimerization of Ty1 RNA and initiation of reverse transcription. This chain is Transposon TyH3 Gag polyprotein (TY1A), found in Saccharomyces cerevisiae (Baker's yeast).